We begin with the raw amino-acid sequence, 240 residues long: Leucyl/phenylalanyl-tRNA--protein transferase (240 aa).

It belongs to the L/F-transferase family.

The protein localises to the cytoplasm. The enzyme catalyses N-terminal L-lysyl-[protein] + L-leucyl-tRNA(Leu) = N-terminal L-leucyl-L-lysyl-[protein] + tRNA(Leu) + H(+). The catalysed reaction is N-terminal L-arginyl-[protein] + L-leucyl-tRNA(Leu) = N-terminal L-leucyl-L-arginyl-[protein] + tRNA(Leu) + H(+). It catalyses the reaction L-phenylalanyl-tRNA(Phe) + an N-terminal L-alpha-aminoacyl-[protein] = an N-terminal L-phenylalanyl-L-alpha-aminoacyl-[protein] + tRNA(Phe). Functionally, functions in the N-end rule pathway of protein degradation where it conjugates Leu, Phe and, less efficiently, Met from aminoacyl-tRNAs to the N-termini of proteins containing an N-terminal arginine or lysine. The sequence is that of Leucyl/phenylalanyl-tRNA--protein transferase from Maridesulfovibrio salexigens (strain ATCC 14822 / DSM 2638 / NCIMB 8403 / VKM B-1763) (Desulfovibrio salexigens).